A 280-amino-acid chain; its full sequence is uncharacterized protein (280 aa).

Positions 1–26 are cleaved as a signal peptide; that stretch reads MNILIKSAVKNFIVFSTALYTSFSFA.

To E.coli YibQ.

This is an uncharacterized protein from Haemophilus influenzae (strain ATCC 51907 / DSM 11121 / KW20 / Rd).